A 464-amino-acid polypeptide reads, in one-letter code: NADH-quinone oxidoreductase subunit N 1 (464 aa).

14 consecutive transmembrane segments (helical) span residues I6–L26, F33–N53, V65–L85, Y98–S118, A122–F142, Y155–A175, F192–F212, I237–W257, Y259–Q279, L285–D305, L312–I332, L356–F376, A401–G421, and F436–L456.

This sequence belongs to the complex I subunit 2 family. As to quaternary structure, NDH-1 is composed of 14 different subunits. Subunits NuoA, H, J, K, L, M, N constitute the membrane sector of the complex.

It is found in the cell inner membrane. It carries out the reaction a quinone + NADH + 5 H(+)(in) = a quinol + NAD(+) + 4 H(+)(out). NDH-1 shuttles electrons from NADH, via FMN and iron-sulfur (Fe-S) centers, to quinones in the respiratory chain. The immediate electron acceptor for the enzyme in this species is believed to be ubiquinone. Couples the redox reaction to proton translocation (for every two electrons transferred, four hydrogen ions are translocated across the cytoplasmic membrane), and thus conserves the redox energy in a proton gradient. The protein is NADH-quinone oxidoreductase subunit N 1 of Aquifex aeolicus (strain VF5).